We begin with the raw amino-acid sequence, 123 residues long: Peptide methionine sulfoxide reductase MsrA (123 aa).

Cysteine 8 is an active-site residue.

This sequence belongs to the MsrA Met sulfoxide reductase family.

It catalyses the reaction L-methionyl-[protein] + [thioredoxin]-disulfide + H2O = L-methionyl-(S)-S-oxide-[protein] + [thioredoxin]-dithiol. It carries out the reaction [thioredoxin]-disulfide + L-methionine + H2O = L-methionine (S)-S-oxide + [thioredoxin]-dithiol. Has an important function as a repair enzyme for proteins that have been inactivated by oxidation. Catalyzes the reversible oxidation-reduction of methionine sulfoxide in proteins to methionine. This is Peptide methionine sulfoxide reductase MsrA from Thermoactinomyces vulgaris.